The following is a 311-amino-acid chain: Ribosomal RNA small subunit methyltransferase H (311 aa).

S-adenosyl-L-methionine contacts are provided by residues 33–35 (AGH), D53, F80, D101, and Q108.

It belongs to the methyltransferase superfamily. RsmH family.

The protein resides in the cytoplasm. The enzyme catalyses cytidine(1402) in 16S rRNA + S-adenosyl-L-methionine = N(4)-methylcytidine(1402) in 16S rRNA + S-adenosyl-L-homocysteine + H(+). In terms of biological role, specifically methylates the N4 position of cytidine in position 1402 (C1402) of 16S rRNA. This chain is Ribosomal RNA small subunit methyltransferase H, found in Clostridioides difficile (strain 630) (Peptoclostridium difficile).